A 291-amino-acid polypeptide reads, in one-letter code: Protein/nucleic acid deglycase HchA (291 aa).

Over residues 1–18 (MSNERDTSRTPTPDHAEH) the composition is skewed to basic and acidic residues. A disordered region spans residues 1–24 (MSNERDTSRTPTPDHAEHNAFFPS). The active-site Nucleophile is the C188.

Belongs to the peptidase C56 family. HchA subfamily.

It localises to the cytoplasm. The enzyme catalyses N(omega)-(1-hydroxy-2-oxopropyl)-L-arginyl-[protein] + H2O = lactate + L-arginyl-[protein] + H(+). It catalyses the reaction N(6)-(1-hydroxy-2-oxopropyl)-L-lysyl-[protein] + H2O = lactate + L-lysyl-[protein] + H(+). The catalysed reaction is S-(1-hydroxy-2-oxopropyl)-L-cysteinyl-[protein] + H2O = lactate + L-cysteinyl-[protein] + H(+). It carries out the reaction N(omega)-(1-hydroxy-2-oxoethyl)-L-arginyl-[protein] + H2O = L-arginyl-[protein] + glycolate + H(+). The enzyme catalyses N(6)-(1-hydroxy-2-oxoethyl)-L-lysyl-[protein] + H2O = glycolate + L-lysyl-[protein] + H(+). It catalyses the reaction S-(1-hydroxy-2-oxoethyl)-L-cysteinyl-[protein] + H2O = glycolate + L-cysteinyl-[protein] + H(+). The catalysed reaction is N(2)-(1-hydroxy-2-oxopropyl)-dGTP + H2O = lactate + dGTP + H(+). It carries out the reaction N(2)-(1-hydroxy-2-oxopropyl)-GTP + H2O = lactate + GTP + H(+). The enzyme catalyses N(2)-(1-hydroxy-2-oxopropyl)-GDP + H2O = lactate + GDP + H(+). It catalyses the reaction N(2)-(1-hydroxy-2-oxopropyl)-GMP + H2O = lactate + GMP + H(+). The catalysed reaction is N(2)-(1-hydroxy-2-oxoethyl)-dGTP + H2O = dGTP + glycolate + H(+). It carries out the reaction N(2)-(1-hydroxy-2-oxoethyl)-GTP + H2O = glycolate + GTP + H(+). The enzyme catalyses N(2)-(1-hydroxy-2-oxoethyl)-GDP + H2O = glycolate + GDP + H(+). It catalyses the reaction N(2)-(1-hydroxy-2-oxoethyl)-GMP + H2O = glycolate + GMP + H(+). The catalysed reaction is an N(2)-(1-hydroxy-2-oxopropyl)-guanosine in RNA + H2O = a guanosine in RNA + lactate + H(+). It carries out the reaction an N(2)-(1-hydroxy-2-oxopropyl)-2'-deoxyguanosine in DNA + H2O = a 2'-deoxyguanosine in DNA + lactate + H(+). The enzyme catalyses an N(2)-(1-hydroxy-2-oxoethyl)-guanosine in RNA + H2O = a guanosine in RNA + glycolate + H(+). It catalyses the reaction an N(2)-(1-hydroxy-2-oxoethyl)-2'-deoxyguanosine in DNA + H2O = a 2'-deoxyguanosine in DNA + glycolate + H(+). In terms of biological role, protein and nucleotide deglycase that catalyzes the deglycation of the Maillard adducts formed between amino groups of proteins or nucleotides and reactive carbonyl groups of glyoxals. Thus, functions as a protein deglycase that repairs methylglyoxal- and glyoxal-glycated proteins, and releases repaired proteins and lactate or glycolate, respectively. Deglycates cysteine, arginine and lysine residues in proteins, and thus reactivates these proteins by reversing glycation by glyoxals. Acts on early glycation intermediates (hemithioacetals and aminocarbinols), preventing the formation of Schiff bases and advanced glycation endproducts (AGE). Also functions as a nucleotide deglycase able to repair glycated guanine in the free nucleotide pool (GTP, GDP, GMP, dGTP) and in DNA and RNA. Is thus involved in a major nucleotide repair system named guanine glycation repair (GG repair), dedicated to reversing methylglyoxal and glyoxal damage via nucleotide sanitization and direct nucleic acid repair. Plays an important role in protecting cells from carbonyl stress. The chain is Protein/nucleic acid deglycase HchA from Pseudomonas aeruginosa (strain UCBPP-PA14).